Here is a 417-residue protein sequence, read N- to C-terminus: NADH-quinone oxidoreductase subunit D (417 aa).

The protein belongs to the complex I 49 kDa subunit family. As to quaternary structure, NDH-1 is composed of 14 different subunits. Subunits NuoB, C, D, E, F, and G constitute the peripheral sector of the complex.

The protein resides in the cell inner membrane. The catalysed reaction is a quinone + NADH + 5 H(+)(in) = a quinol + NAD(+) + 4 H(+)(out). Its function is as follows. NDH-1 shuttles electrons from NADH, via FMN and iron-sulfur (Fe-S) centers, to quinones in the respiratory chain. The immediate electron acceptor for the enzyme in this species is believed to be ubiquinone. Couples the redox reaction to proton translocation (for every two electrons transferred, four hydrogen ions are translocated across the cytoplasmic membrane), and thus conserves the redox energy in a proton gradient. The protein is NADH-quinone oxidoreductase subunit D of Nitrosospira multiformis (strain ATCC 25196 / NCIMB 11849 / C 71).